The primary structure comprises 240 residues: Cysteine-rich venom protein (240 aa).

The N-terminal stretch at Met-1–Gly-19 is a signal peptide. One can recognise an SCP domain in the interval Asp-39–Tyr-166. 8 cysteine pairs are disulfide-bonded: Cys-75/Cys-153, Cys-92/Cys-167, Cys-148/Cys-164, Cys-186/Cys-193, Cys-189/Cys-198, Cys-202/Cys-235, Cys-211/Cys-229, and Cys-220/Cys-233. The 34-residue stretch at Cys-202–Cys-235 folds into the ShKT domain.

Belongs to the CRISP family. As to expression, expressed by the venom gland.

It is found in the secreted. May block ryanodine receptors (RYR). The chain is Cysteine-rich venom protein from Protobothrops mucrosquamatus (Taiwan habu).